Here is a 334-residue protein sequence, read N- to C-terminus: Glycerol-3-phosphate dehydrogenase [NAD(P)+] 2 (334 aa).

Positions 16, 36, 37, and 110 each coordinate NADPH. Residues lysine 110 and glycine 140 each coordinate sn-glycerol 3-phosphate. Residue alanine 144 participates in NADPH binding. Sn-glycerol 3-phosphate is bound by residues lysine 195, aspartate 248, serine 258, arginine 259, and asparagine 260. The Proton acceptor role is filled by lysine 195. Arginine 259 is an NADPH binding site. NADPH contacts are provided by valine 282 and glutamate 284.

Belongs to the NAD-dependent glycerol-3-phosphate dehydrogenase family.

The protein localises to the cytoplasm. The enzyme catalyses sn-glycerol 3-phosphate + NAD(+) = dihydroxyacetone phosphate + NADH + H(+). It carries out the reaction sn-glycerol 3-phosphate + NADP(+) = dihydroxyacetone phosphate + NADPH + H(+). It participates in membrane lipid metabolism; glycerophospholipid metabolism. Its function is as follows. Catalyzes the reduction of the glycolytic intermediate dihydroxyacetone phosphate (DHAP) to sn-glycerol 3-phosphate (G3P), the key precursor for phospholipid synthesis. The sequence is that of Glycerol-3-phosphate dehydrogenase [NAD(P)+] 2 from Mycobacterium tuberculosis (strain ATCC 25618 / H37Rv).